The sequence spans 268 residues: Energy-coupling factor transporter transmembrane protein EcfT (268 aa).

6 consecutive transmembrane segments (helical) span residues 26 to 46 (ILAVLFYMVMVFLANSPLSYG), 47 to 67 (ILIGFIVLGAALAKLPAGLLL), 73 to 93 (LWIIILLTMVIHFVTDPGEAL), 116 to 136 (LVLLLLVSSLMTFTTSPIVLT), 151 to 171 (VPAHELAMMMTIALRFIPTLL), and 246 to 266 (ALTGLVMLALFVLLAFLRWGI).

The protein belongs to the energy-coupling factor EcfT family. As to quaternary structure, forms a stable energy-coupling factor (ECF) transporter complex composed of 2 membrane-embedded substrate-binding proteins (S component), 2 ATP-binding proteins (A component) and 2 transmembrane proteins (T component). May be able to interact with more than 1 S component at a time.

Its subcellular location is the cell membrane. In terms of biological role, transmembrane (T) component of an energy-coupling factor (ECF) ABC-transporter complex. Unlike classic ABC transporters this ECF transporter provides the energy necessary to transport a number of different substrates. This chain is Energy-coupling factor transporter transmembrane protein EcfT, found in Acidaminococcus fermentans (strain ATCC 25085 / DSM 20731 / CCUG 9996 / CIP 106432 / VR4).